We begin with the raw amino-acid sequence, 3374 residues long: Abnormal spindle-like microcephaly-associated protein homolog (3374 aa).

Residues Ser-212, Ser-215, Ser-300, and Ser-325 each carry the phosphoserine modification. The segment at 492–518 (SSKNIVTPPCKAASVARKRKSKGHTGD) is disordered. Phosphoserine is present on Ser-540. A Calponin-homology (CH) 1 domain is found at 855-991 (KASXDILLAF…LLWKIALAFQ (137 aa)). Positions 992–1013 (VDISLNLDQLKEEIDFLKKTQS) form a coiled coil. Phosphoserine is present on Ser-1038. Residues 1045–1196 (SESVKLLMDW…YLSFLCARLL (152 aa)) form the Calponin-homology (CH) 2 domain. 41 consecutive IQ domains span residues 1201-1230 (ETRAARLIQTTWRQYKLKKDLKHHQERDKA), 1282-1313 (HSKSASIIQRYWRRYSTRKQFLKLKYYSIILQ), 1472-1503 (KRAAAIRLQAAFRGRRARNLCKQIRAACVLQS), 1567-1596 (TRSAVIVLQSACRRMQARKKFLHILTAVVK), 1590-1619 (ILTAVVKIQSYYRAYASRRKFLRLKKATVK), 1613-1642 (LKKATVKLQSIVRMKQARKQYLHLRAIAQQ), 1647-1678 (LRASCIKLQAFLRGYLVRKQVRLQRKAAVLLQ), 1720-1749 (VRRAVTCLQAAYRGYKVRRQLQQQSAAALK), 1743-1772 (QSAAALKIQAAFRGYRQRTKYQSMLQSALK), 1793-1822 (TRTAAISLQSAYRGWKVRKQMRKEHEAAVK), 1816-1847 (EHEAAVKIQSAFRTARAQKEFRLLKTAASVIQ), 1866-1897 (LRRAAVTLQSAWRGRAARRRIQKQQRCAIIIQ), 1939-1968 (TKGAAIILQSAFRGVRARKKVKEMHQAATT), 1962-1993 (MHQAATTIQSRYRAYQARKKYASYRAAAVIIQ), 2012-2043 (VKKAALKIQAVYRGVRERRQTRRMHMAATLIK), 2035-2066 (MHMAATLIKAAFKMQQSRRRYQQMRTAAIVIQ), 2085-2116 (TLKAVALLQAALRGARVRQNLRRMRTAATLIQ), 2108-2137 (MRTAATLIQAHYRGRRQQAYFNKLKKVTKT), 2158-2189 (LRRSAICIQAAFRGMRARKRLKAMHSAAAVIQ), 2181-2212 (MHSAAAVIQRRFRTLVMRRRFLSLRKTAVWVQ), 2230-2261 (LQKAAIKIQSWYRGWMVRKKTQEMRRAATVLQ), 2253-2284 (MRRAATVLQAAFRRHRARARYQAWRRASQVIQ), 2303-2334 (QXRSALVLQAAFRGMRIRRRLKRMHASATLIQ), 2326-2357 (MHASATLIQSRFRSVRVRKRFLSLKKAAVFVQ), 2376-2407 (LKKAIIIIQAFYRRRMVKKQLQEMHRAAALIQ), 2399-2430 (MHRAAALIQASFRMHRARLAFQTWKLAXVLIQ), 2449-2480 (WRHSAVVIQAAYKGLKARQLLREKHRAAVIIQ), 2472-2503 (KHRAAVIIQSTYRMYRQHFSYQKLQWATKVIQ), 2542-2573 (QHQAAITVQKHFRAFKTRKRYLHFRAKVVFVQ), 2583-2612 (RTQAAICIQSCFRGFKARRGIQGMHLAATR), 2606-2637 (MHLAATRIQSCYRRHRARADYQAKKRAVVVIQ), 2656-2685 (IQKSARTIQAAFRGMKVRQKLKTMPDEKMA), 2732-2763 (QRKAAVTIQKAFRKMVTRRLEKQRSAAVQIQS), 2777-2806 (QKRAALTLQRYFRTQQSRKRFLLYREAAVG), 2827-2856 (IRSSVIIIQARVKGFIQKRKFRKLKDSTIK), 2850-2881 (LKDSTIKIQAVWRRHKARKYLREVKAACRIQA), 2872-2903 (EVKAACRIQAWYRCRKARKEYLAVLRAVRIIQ), 2947-2976 (RHQAACLIQANFRGYKARQVFLQQKSAALT), 2997-3028 (LKKSTVVLQALVRGWLVRKRISEQRAKIRLLH), 3099-3128 (HSRAASVIQRAVRHFLLRKKQENLNKRIAK), and 3122-3153 (LNKRIAKIQALWRGYSWRKKNDTSKTKAIRQR).

It is found in the cytoplasm. The protein localises to the cytoskeleton. Its subcellular location is the spindle. The protein resides in the nucleus. In terms of biological role, probable role in mitotic spindle regulation and coordination of mitotic processes. May have a preferential role in regulating neurogenesis. The protein is Abnormal spindle-like microcephaly-associated protein homolog (ASPM) of Ovis aries (Sheep).